Here is a 75-residue protein sequence, read N- to C-terminus: Small ribosomal subunit protein bS16 (75 aa).

It belongs to the bacterial ribosomal protein bS16 family.

This Campylobacter jejuni subsp. jejuni serotype O:23/36 (strain 81-176) protein is Small ribosomal subunit protein bS16.